The chain runs to 222 residues: MDARELAKYIDHTNLKAFATREDIKRLCEEAKEYGFYAVCVNPYRVKDAAEFLKGTDIKIASVVGFPLGATFTETKVQEAIMAVRNGADEIDMVMNIGAMKDGDYGFVERDIREVVEAVHPMGAKVKVIIETCYLSDEEKIKACELAKKAGADFVKTSTGFGTAGAKVEDVKLMRSVVGNDMGVKAAGGIHNAKQAIAMIEAGATRIGASRSVEIIETLELI.

Catalysis depends on D92, which acts as the Proton donor/acceptor. Residue K156 is the Schiff-base intermediate with acetaldehyde of the active site. Residue K185 is the Proton donor/acceptor of the active site.

It belongs to the DeoC/FbaB aldolase family. DeoC type 1 subfamily. As to quaternary structure, homodimer.

It is found in the cytoplasm. It catalyses the reaction 2-deoxy-D-ribose 5-phosphate = D-glyceraldehyde 3-phosphate + acetaldehyde. The protein operates within carbohydrate degradation; 2-deoxy-D-ribose 1-phosphate degradation; D-glyceraldehyde 3-phosphate and acetaldehyde from 2-deoxy-alpha-D-ribose 1-phosphate: step 2/2. With respect to regulation, shows high stability to high concentrations of acetaldehyde. Functionally, catalyzes a reversible aldol reaction between acetaldehyde and D-glyceraldehyde 3-phosphate to generate 2-deoxy-D-ribose 5-phosphate. The protein is Deoxyribose-phosphate aldolase of Aciduliprofundum boonei (strain DSM 19572 / T469).